An 89-amino-acid polypeptide reads, in one-letter code: Small ribosomal subunit protein uS14A (89 aa).

Belongs to the universal ribosomal protein uS14 family. As to quaternary structure, part of the 30S ribosomal subunit. Contacts proteins S3 and S10.

In terms of biological role, binds 16S rRNA, required for the assembly of 30S particles and may also be responsible for determining the conformation of the 16S rRNA at the A site. In Staphylococcus aureus (strain Newman), this protein is Small ribosomal subunit protein uS14A.